We begin with the raw amino-acid sequence, 169 residues long: Peptide deformylase 1 (169 aa).

The Fe cation site is built by Cys92 and His134. Residue Glu135 is part of the active site. Residue His138 participates in Fe cation binding.

Belongs to the polypeptide deformylase family. Fe(2+) is required as a cofactor.

The catalysed reaction is N-terminal N-formyl-L-methionyl-[peptide] + H2O = N-terminal L-methionyl-[peptide] + formate. Functionally, removes the formyl group from the N-terminal Met of newly synthesized proteins. Requires at least a dipeptide for an efficient rate of reaction. N-terminal L-methionine is a prerequisite for activity but the enzyme has broad specificity at other positions. The polypeptide is Peptide deformylase 1 (Ralstonia nicotianae (strain ATCC BAA-1114 / GMI1000) (Ralstonia solanacearum)).